Here is a 109-residue protein sequence, read N- to C-terminus: COX assembly mitochondrial protein 2 (109 aa).

The 45-residue stretch at 10-54 (FHSCLDFINALDKCHQKEYYKRIFGLCNNEKDALNKCLKEASLNN) folds into the CHCH domain. Short sequence motifs (cx9C motif) lie at residues 13-23 (CLDFINALDKC) and 36-46 (CNNEKDALNKC). Disulfide bonds link Cys-13–Cys-46 and Cys-23–Cys-36.

The protein belongs to the CMC family. Interacts with CMC1.

It localises to the mitochondrion inner membrane. Its subcellular location is the mitochondrion intermembrane space. Functionally, required for mitochondrial cytochrome c oxidase (COX) assembly and respiration. May be involved in copper trafficking and distribution to mitochondrial COX and SOD1. This is COX assembly mitochondrial protein 2 (CMC2) from Saccharomyces cerevisiae (strain ATCC 204508 / S288c) (Baker's yeast).